Reading from the N-terminus, the 628-residue chain is tRNA uridine 5-carboxymethylaminomethyl modification enzyme MnmG (628 aa).

14 to 19 contacts FAD; the sequence is GAGHAG. 273-287 lines the NAD(+) pocket; that stretch reads GPRYCPSIEDKVVRF.

Belongs to the MnmG family. Homodimer. Heterotetramer of two MnmE and two MnmG subunits. The cofactor is FAD.

Its subcellular location is the cytoplasm. In terms of biological role, NAD-binding protein involved in the addition of a carboxymethylaminomethyl (cmnm) group at the wobble position (U34) of certain tRNAs, forming tRNA-cmnm(5)s(2)U34. The chain is tRNA uridine 5-carboxymethylaminomethyl modification enzyme MnmG from Bacillus velezensis (strain DSM 23117 / BGSC 10A6 / LMG 26770 / FZB42) (Bacillus amyloliquefaciens subsp. plantarum).